Consider the following 863-residue polypeptide: Leucine--tRNA ligase (863 aa).

Positions 42 to 52 match the 'HIGH' region motif; the sequence is PYPSGRLHMGH. The 'KMSKS' region motif lies at 622 to 626; that stretch reads KMSKS. Position 625 (Lys-625) interacts with ATP.

Belongs to the class-I aminoacyl-tRNA synthetase family.

The protein localises to the cytoplasm. The catalysed reaction is tRNA(Leu) + L-leucine + ATP = L-leucyl-tRNA(Leu) + AMP + diphosphate. The chain is Leucine--tRNA ligase from Shewanella loihica (strain ATCC BAA-1088 / PV-4).